Reading from the N-terminus, the 344-residue chain is [LysW]-L-2-aminoadipate 6-phosphate reductase (344 aa).

Residues 12–15 (SGYA), 36–38 (SRR), and L75 each bind NADP(+). C148 is an active-site residue. Residues S180, A184, and N312 each contribute to the NADP(+) site.

Belongs to the NAGSA dehydrogenase family. Type 1 subfamily. LysY sub-subfamily. In terms of assembly, homotetramer. Interacts with LysW. May form a ternary complex with LysW and LysZ.

It localises to the cytoplasm. The enzyme catalyses [amino-group carrier protein]-C-terminal-N-(1-carboxy-5-oxopentan-1-yl)-L-glutamine + phosphate + NADP(+) = [amino-group carrier protein]-C-terminal-N-(1-carboxy-5-phosphooxy-5-oxopentan-1-yl)-L-glutamine + NADPH + H(+). Its pathway is amino-acid biosynthesis; L-lysine biosynthesis via AAA pathway; L-lysine from L-alpha-aminoadipate (Thermus route): step 3/5. Catalyzes the NADPH-dependent reduction of [LysW]-aminoadipate 6-phosphate to yield [LysW]-aminoadipate 6-semialdehyde. The sequence is that of [LysW]-L-2-aminoadipate 6-phosphate reductase from Thermus thermophilus (strain ATCC BAA-163 / DSM 7039 / HB27).